The chain runs to 156 residues: Perlucin-like protein (156 aa).

Positions 1-22 (MGKLTVVGILTLFIFYIVAASG) are cleaved as a signal peptide. Disulfide bonds link Cys30/Cys41, Cys58/Cys156, and Cys131/Cys147. In terms of domain architecture, C-type lectin spans 37 to 156 (YKTNCYFFSP…CNTDQMGYIC (120 aa)).

As to expression, component of the organic matrix of calcified shell layers like nacre and prisms.

The protein resides in the secreted. This chain is Perlucin-like protein, found in Mytilus galloprovincialis (Mediterranean mussel).